Consider the following 145-residue polypeptide: UPF0201 protein STK_09490 (145 aa).

The protein belongs to the UPF0201 family.

In Sulfurisphaera tokodaii (strain DSM 16993 / JCM 10545 / NBRC 100140 / 7) (Sulfolobus tokodaii), this protein is UPF0201 protein STK_09490.